The sequence spans 120 residues: Small ribosomal subunit protein eS24 (120 aa).

A disordered region spans residues 101-120 (RDAGTKQKKGGSKGGQGAKG).

Belongs to the eukaryotic ribosomal protein eS24 family.

The polypeptide is Small ribosomal subunit protein eS24 (Saccharolobus islandicus (strain Y.N.15.51 / Yellowstone #2) (Sulfolobus islandicus)).